A 431-amino-acid chain; its full sequence is Sulfide dehydrogenase [flavocytochrome c] flavoprotein chain (431 aa).

Residues 1-30 (MTLNRRDFIKTSGAAVAAVGILGFPHLAFG) constitute a signal peptide (tat-type signal). 70–76 (YTCYLSN) lines the FAD pocket. The cysteines at positions 191 and 367 are disulfide-linked.

Dimer of one cytochrome and one flavoprotein. In terms of processing, predicted to be exported by the Tat system. The position of the signal peptide cleavage has been experimentally proven.

It localises to the periplasm. It catalyses the reaction hydrogen sulfide + 2 Fe(III)-[cytochrome c] = sulfur + 2 Fe(II)-[cytochrome c] + H(+). The chain is Sulfide dehydrogenase [flavocytochrome c] flavoprotein chain (fccB) from Allochromatium vinosum (strain ATCC 17899 / DSM 180 / NBRC 103801 / NCIMB 10441 / D) (Chromatium vinosum).